The chain runs to 410 residues: Translation initiation factor 2 subunit gamma (410 aa).

A tr-type G domain is found at 6–203 (QSEVNIGMVG…AIQEFIPTPK (198 aa)). The G1 stretch occupies residues 15–22 (GHVDHGKT). Positions 18, 22, 43, and 45 each coordinate Mg(2+). 18–23 (DHGKTS) contacts GTP. Positions 43–47 (GISIR) are G2. Positions 58, 61, 73, and 76 each coordinate Zn(2+). The interval 90–93 (DAPG) is G3. GTP is bound by residues 146-149 (NKID) and 181-183 (SAH). Residues 146 to 149 (NKID) form a G4 region. The segment at 181–183 (SAH) is G5.

This sequence belongs to the TRAFAC class translation factor GTPase superfamily. Classic translation factor GTPase family. EIF2G subfamily. Heterotrimer composed of an alpha, a beta and a gamma chain. Mg(2+) is required as a cofactor.

It carries out the reaction GTP + H2O = GDP + phosphate + H(+). In terms of biological role, eIF-2 functions in the early steps of protein synthesis by forming a ternary complex with GTP and initiator tRNA. This chain is Translation initiation factor 2 subunit gamma, found in Methanococcus vannielii (strain ATCC 35089 / DSM 1224 / JCM 13029 / OCM 148 / SB).